Reading from the N-terminus, the 369-residue chain is Large ribosomal subunit protein uL4 (369 aa).

An N-acetylthreonine modification is found at Thr-2.

The protein belongs to the universal ribosomal protein uL4 family.

This chain is Large ribosomal subunit protein uL4 (rpl4), found in Dictyostelium discoideum (Social amoeba).